We begin with the raw amino-acid sequence, 65 residues long: Large ribosomal subunit protein bL35 (65 aa).

This sequence belongs to the bacterial ribosomal protein bL35 family.

In Clostridium kluyveri (strain NBRC 12016), this protein is Large ribosomal subunit protein bL35.